The primary structure comprises 124 residues: Calvin cycle protein CP12-1, chloroplastic (124 aa).

The transit peptide at 1–47 directs the protein to the chloroplast; sequence MTTIAAAGLNVATPRVVVRPVARVLGPVRLNYPWKFGSMKRMVVVKA. Cystine bridges form between C68/C77 and C110/C119. The interval 90–124 is disordered; it reads AASHARDKKKAGGSDPLEEYCNDNPETDECRTYDN. The span at 105–116 shows a compositional bias: acidic residues; sequence PLEEYCNDNPET.

The protein belongs to the CP12 family. Monomer. Component of a complex that contains two dimers of PRK, two tetramers of GAPDH and CP12. CP12 associates with GAPDH, causing its conformation to change. This GAPDH/CP12 complex binds PRK to form a half-complex (one unit). This unit probably dimerizes due partially to interactions between the enzymes of each unit. Post-translationally, contains two disulfide bonds; only the oxidized protein, with two disulfide bonds, is active in complex formation. The C-terminal disulfide is involved in the interaction with GAPDH and the N-terminal disulfide mediates the binding of PRK with this binary complex. As to expression, mostly expressed in flowers, hypocotyl, cotyledons, leaves, stems, and flower stalks. Barely detectable in roots and siliques. Present in root tips and lateral roots. Accumulates in the cotyledons of etiolated seedlings.

The protein localises to the plastid. It localises to the chloroplast. Acts as a linker essential in the assembly of a core complex of PRK/GAPDH. Coordinates the reversible inactivation of chloroplast enzymes GAPDH and PRK during darkness in photosynthetic tissues. This is Calvin cycle protein CP12-1, chloroplastic (CP12-1) from Arabidopsis thaliana (Mouse-ear cress).